Consider the following 363-residue polypeptide: Probable aminomethyltransferase (363 aa).

The protein belongs to the GcvT family. The glycine cleavage system is composed of four proteins: P, T, L and H.

The enzyme catalyses N(6)-[(R)-S(8)-aminomethyldihydrolipoyl]-L-lysyl-[protein] + (6S)-5,6,7,8-tetrahydrofolate = N(6)-[(R)-dihydrolipoyl]-L-lysyl-[protein] + (6R)-5,10-methylene-5,6,7,8-tetrahydrofolate + NH4(+). Functionally, the glycine cleavage system catalyzes the degradation of glycine. The protein is Probable aminomethyltransferase of Haloarcula marismortui (strain ATCC 43049 / DSM 3752 / JCM 8966 / VKM B-1809) (Halobacterium marismortui).